The chain runs to 624 residues: Chaperone protein HtpG (624 aa).

Residues 1 to 336 (MKGQETRGFQ…SNDLPLNVSR (336 aa)) form an a; substrate-binding region. The interval 337 to 552 (EILQDSTVTR…ADEMSTQMAK (216 aa)) is b. The segment at 553-624 (LFAAAGQSVP…IRRMNQLLVS (72 aa)) is c.

This sequence belongs to the heat shock protein 90 family. As to quaternary structure, homodimer.

The protein localises to the cytoplasm. Functionally, molecular chaperone. Has ATPase activity. The chain is Chaperone protein HtpG from Salmonella typhi.